Here is a 614-residue protein sequence, read N- to C-terminus: Dihydroxy-acid dehydratase (614 aa).

Position 81 (D81) interacts with Mg(2+). C122 is a binding site for [2Fe-2S] cluster. Residues D123 and K124 each contribute to the Mg(2+) site. Residue K124 is modified to N6-carboxylysine. C195 is a binding site for [2Fe-2S] cluster. Residue E491 coordinates Mg(2+). Catalysis depends on S517, which acts as the Proton acceptor.

The protein belongs to the IlvD/Edd family. As to quaternary structure, homodimer. Requires [2Fe-2S] cluster as cofactor. Mg(2+) serves as cofactor.

The catalysed reaction is (2R)-2,3-dihydroxy-3-methylbutanoate = 3-methyl-2-oxobutanoate + H2O. It catalyses the reaction (2R,3R)-2,3-dihydroxy-3-methylpentanoate = (S)-3-methyl-2-oxopentanoate + H2O. The protein operates within amino-acid biosynthesis; L-isoleucine biosynthesis; L-isoleucine from 2-oxobutanoate: step 3/4. Its pathway is amino-acid biosynthesis; L-valine biosynthesis; L-valine from pyruvate: step 3/4. Functions in the biosynthesis of branched-chain amino acids. Catalyzes the dehydration of (2R,3R)-2,3-dihydroxy-3-methylpentanoate (2,3-dihydroxy-3-methylvalerate) into 2-oxo-3-methylpentanoate (2-oxo-3-methylvalerate) and of (2R)-2,3-dihydroxy-3-methylbutanoate (2,3-dihydroxyisovalerate) into 2-oxo-3-methylbutanoate (2-oxoisovalerate), the penultimate precursor to L-isoleucine and L-valine, respectively. This is Dihydroxy-acid dehydratase from Nitrobacter winogradskyi (strain ATCC 25391 / DSM 10237 / CIP 104748 / NCIMB 11846 / Nb-255).